Here is an 85-residue protein sequence, read N- to C-terminus: Small ribosomal subunit protein bS20 (85 aa).

This sequence belongs to the bacterial ribosomal protein bS20 family.

Its function is as follows. Binds directly to 16S ribosomal RNA. The protein is Small ribosomal subunit protein bS20 of Borreliella afzelii (strain PKo) (Borrelia afzelii).